Consider the following 166-residue polypeptide: Small ribosomal subunit protein uS5 (166 aa).

The region spanning 12–75 is the S5 DRBM domain; the sequence is YIEKLVQVNR…EAARRNMIQV (64 aa).

Belongs to the universal ribosomal protein uS5 family. As to quaternary structure, part of the 30S ribosomal subunit. Contacts proteins S4 and S8.

With S4 and S12 plays an important role in translational accuracy. Its function is as follows. Located at the back of the 30S subunit body where it stabilizes the conformation of the head with respect to the body. In Pseudomonas fluorescens (strain ATCC BAA-477 / NRRL B-23932 / Pf-5), this protein is Small ribosomal subunit protein uS5.